The chain runs to 339 residues: Coproporphyrin III ferrochelatase (339 aa).

Fe-coproporphyrin III is bound by residues Ser52 and Tyr121. Residues His181 and Glu264 each coordinate Fe(2+).

This sequence belongs to the ferrochelatase family.

The protein localises to the cytoplasm. The enzyme catalyses Fe-coproporphyrin III + 2 H(+) = coproporphyrin III + Fe(2+). Its pathway is porphyrin-containing compound metabolism; protoheme biosynthesis. Functionally, involved in coproporphyrin-dependent heme b biosynthesis. Catalyzes the insertion of ferrous iron into coproporphyrin III to form Fe-coproporphyrin III. The polypeptide is Coproporphyrin III ferrochelatase (Mycolicibacterium vanbaalenii (strain DSM 7251 / JCM 13017 / BCRC 16820 / KCTC 9966 / NRRL B-24157 / PYR-1) (Mycobacterium vanbaalenii)).